A 673-amino-acid polypeptide reads, in one-letter code: MNGFFKNLSLWLVIGLLMVMLFNLFNSPQGPGQSITFSDFSEMVAQGKVTAVTLEGRTVRGLSTDGSPFSSRVPDNYDLTKDLLAHGVDIDVREPEGTPMLMQILISWFPMLLLIAVWIYFMRQMQSGGGRGAMSFGKSKAKLMSDKAAKVTFQDVAGIEEAKEELQEVVQFLKDPHKFQRLGGKIPKGVLLVGPPGTGKTLLARAIAGEANVPFFNLSGSDFVEMFVGVGAARVRDMFEQGKKNAPCIIFIDEIDAVGRHRGAGLGGGHDEREQTLNQLLVEMDGFESTEGVIMVAATNRPDVLDPALLRPGRFDRQVTVPNPDILGRTQILKVHMNKVPLSDSVDAEVIARATPGFSGADLANLVNEAALIAAQLDKRVVEMEDFENAKDKVMMGKPRRSAVISEKERKTTAYHEAGHAVVAMALDGADPVHKVTIIPRGRALGLTMQLPLEDRYTYSKVQLEQNIAILMGGRLAEELVLNQLTTGAGNDIQRATDLARKMICSYGMSDTLGPLTYGENEQEIFLGREITQHKSVSEETARRIDAEVFDIVDRNYKRAKQILTDKMEVLHTMAQALLERETIDADEVIKLMAGEPAETALKPLKKKDERANKPTPTVADDGEQGDQTAKDAVAGSVTQAEDDVEGSTRTATEASTQEVVSKDTPEGDDKDR.

At 1 to 7 (MNGFFKN) the chain is on the cytoplasmic side. Residues 8 to 28 (LSLWLVIGLLMVMLFNLFNSP) traverse the membrane as a helical segment. Residues 29–100 (QGPGQSITFS…DVREPEGTPM (72 aa)) lie on the Periplasmic side of the membrane. A helical membrane pass occupies residues 101–121 (LMQILISWFPMLLLIAVWIYF). The Cytoplasmic portion of the chain corresponds to 122–673 (MRQMQSGGGR…DTPEGDDKDR (552 aa)). ATP is bound at residue 194 to 201 (GPPGTGKT). Position 416 (H416) interacts with Zn(2+). Residue E417 is part of the active site. Zn(2+) is bound by residues H420 and D492. The disordered stretch occupies residues 601 to 673 (ALKPLKKKDE…DTPEGDDKDR (73 aa)). Polar residues predominate over residues 648 to 660 (STRTATEASTQEV). Residues 661–673 (VSKDTPEGDDKDR) show a composition bias toward basic and acidic residues.

In the central section; belongs to the AAA ATPase family. It in the C-terminal section; belongs to the peptidase M41 family. In terms of assembly, homohexamer. Zn(2+) serves as cofactor.

Its subcellular location is the cell inner membrane. Its function is as follows. Acts as a processive, ATP-dependent zinc metallopeptidase for both cytoplasmic and membrane proteins. Plays a role in the quality control of integral membrane proteins. The sequence is that of ATP-dependent zinc metalloprotease FtsH from Magnetococcus marinus (strain ATCC BAA-1437 / JCM 17883 / MC-1).